Consider the following 187-residue polypeptide: Dirigent protein 23 (187 aa).

Residues 1–24 form the signal peptide; the sequence is MAKEEYVSRMLVMLIMIMPLVAQG. Residue asparagine 182 is glycosylated (N-linked (GlcNAc...) asparagine).

Belongs to the plant dirigent protein family. Homodimer.

It is found in the secreted. Its subcellular location is the extracellular space. The protein localises to the apoplast. Functionally, dirigent proteins impart stereoselectivity on the phenoxy radical-coupling reaction, yielding optically active lignans from two molecules of coniferyl alcohol in the biosynthesis of lignans, flavonolignans, and alkaloids and thus plays a central role in plant secondary metabolism. The polypeptide is Dirigent protein 23 (DIR23) (Arabidopsis thaliana (Mouse-ear cress)).